Consider the following 329-residue polypeptide: Probable fructokinase-2 (329 aa).

Belongs to the carbohydrate kinase PfkB family.

It carries out the reaction D-fructose + ATP = D-fructose 6-phosphate + ADP + H(+). It participates in glycan biosynthesis; starch biosynthesis. May play an important role in maintaining the flux of carbon towards starch formation. This is Probable fructokinase-2 from Arabidopsis thaliana (Mouse-ear cress).